The following is a 528-amino-acid chain: Acid-sensing ion channel 1 (528 aa).

Over 1-49 (MELKAEEEEVGGVQPVSIQAFASSSTLHGLAHIFSYERLSLKRALWALC) the chain is Cytoplasmic. A helical membrane pass occupies residues 50–66 (FLGSLAVLLCVCTERVQ). Residues 67-427 (YYFHYHHVTK…ETIEQKKAYE (361 aa)) are Extracellular-facing. Cystine bridges form between cysteine 93–cysteine 194, cysteine 172–cysteine 179, cysteine 290–cysteine 367, cysteine 310–cysteine 363, cysteine 314–cysteine 361, cysteine 323–cysteine 345, and cysteine 325–cysteine 337. N-linked (GlcNAc...) asparagine glycosylation is found at asparagine 368 and asparagine 395. Residues 428-458 (IAGLLGDIGGQMGLFIGASILTVLELFDYAY) traverse the membrane as a discontinuously helical segment. The short motif at 444–446 (GAS) is the GAS motif; ion selectivity filter element. The Cytoplasmic segment spans residues 459–528 (EVIKHKLCRR…ARGTFEDFTC (70 aa)). Serine 479 carries the post-translational modification Phosphoserine; by PKA. At serine 499 the chain carries Phosphoserine.

This sequence belongs to the amiloride-sensitive sodium channel (TC 1.A.6) family. ASIC1 subfamily. Forms functional homotrimeric channels. Forms heterotrimers with other ASIC proteins, resulting in channels with distinct properties. Interacts with PICK1; regulates ASIC1 clustering in membranes. Interacts with STOM; alters heterotrimeric channels activity. Post-translationally, pH-gating could be regulated by serine proteases. In terms of processing, phosphorylation by PKA regulates interaction with PICK1 and subcellular localization. Phosphorylation by PKC may regulate the channel. In terms of tissue distribution, expressed in neurons throughout the central and peripheral nervous system.

The protein localises to the cell membrane. Its subcellular location is the postsynaptic cell membrane. It is found in the cell projection. It localises to the dendrite. The enzyme catalyses Na(+)(in) = Na(+)(out). It catalyses the reaction K(+)(in) = K(+)(out). The catalysed reaction is Li(+)(in) = Li(+)(out). It carries out the reaction Ca(2+)(in) = Ca(2+)(out). With respect to regulation, potentiated by FMRFamide-related neuropeptides, which are induced during inflammation and modulate pain responses. Inhibited by the diuretic drug amiloride. Spider venom psalmotoxin-1 inhibits the channel by locking it in its desensitized conformation. The homotrimeric channel is inhibited by the spider venom pi-theraphotoxin-Hm3a. Homotrimeric and heterotrimeric (with ASIC2 isoform 1) channels are inhibited by the snake venom mambalgin-1, which prevents proton-induced transitions from the resting closed state to the active and/or desensitized states. Inhibited by Texas coral snake toxin MitTx1. In terms of biological role, forms voltage-independent, pH-gated trimeric sodium channels that act as postsynaptic excitatory receptors in the nervous system, playing a crucial role in regulating synaptic plasticity, learning, and memory. Upon extracellular pH drop this channel elicits transient, fast activating, and completely desensitizing inward currents. Displays high selectivity for sodium ions but can also permit the permeation of other cations. Regulates more or less directly intracellular calcium concentration and CaMKII phosphorylation, and thereby the density of dendritic spines. Modulates neuronal activity in the circuits underlying innate fear. Functionally, has high selectivity for sodium ions, but can also be permeable to other cations including calcium, lithium and potassium. Produces acid activated currents with a reduced amplitude and inactivates faster. Has high selectivity for sodium ions but also supports a calcium-mediated current which is sustained and maintained as long as acidic conditions are present. Also potentially permeable to lithium and potassium. Its function is as follows. Has no measurable proton-gated sodium channel activity in vitro. The polypeptide is Acid-sensing ion channel 1 (Homo sapiens (Human)).